Reading from the N-terminus, the 230-residue chain is Androgen-dependent TFPI-regulating protein (230 aa).

Residues 1–7 are Cytoplasmic-facing; sequence MTKTTTC. A helical membrane pass occupies residues 8 to 28; sequence VYHFLVLNWYIFLNYHIPQIG. The Extracellular segment spans residues 29–45; sequence RNEEKLREFHDGGRSKY. A helical membrane pass occupies residues 46 to 66; that stretch reads LTLLNLLLQAIFFGVACLDDV. Residues 67–85 are Cytoplasmic-facing; that stretch reads LKRVIGRKDIKFVTSFRDL. A helical transmembrane segment spans residues 86–106; sequence LFTTMAFPISTFVFLVFWTLF. Over 107–120 the chain is Extracellular; sequence HYDRSLVYPKGLDD. A helical transmembrane segment spans residues 121–141; it reads FFPAWVNHAMHTSIFPFSLFE. Topologically, residues 142-154 are cytoplasmic; it reads TILRPHNYPSKKL. The chain crosses the membrane as a helical span at residues 155–175; sequence GLTLLGAFNFAYIIRILWRYV. Residues 176 to 190 are Extracellular-facing; that stretch reads QTGNWVYPVFDSLSP. A helical transmembrane segment spans residues 191-211; the sequence is LGIIIFFSAAYILVAGIYLFG. Topologically, residues 212–230 are cytoplasmic; the sequence is EKINHWKWGAIAKPQMKKN.

This sequence belongs to the AIG1 family.

It is found in the cell membrane. The catalysed reaction is 9-hexadecanoyloxy-octadecanoate + H2O = 9-hydroxy-octadecanoate + hexadecanoate + H(+). It catalyses the reaction 12-hexadecanoyloxy-octadecanoate + H2O = 12-hydroxyoctadecanoate + hexadecanoate + H(+). The enzyme catalyses 9-(9Z-hexadecenoyloxy)-octadecanoate + H2O = (9Z)-hexadecenoate + 9-hydroxy-octadecanoate + H(+). It carries out the reaction 12-(9Z-hexadecenoyloxy)-octadecanoate + H2O = 12-hydroxyoctadecanoate + (9Z)-hexadecenoate + H(+). The catalysed reaction is 13-(9Z-hexadecenoyloxy)-octadecanoate + H2O = 13-hydroxy-octadecanoate + (9Z)-hexadecenoate + H(+). It catalyses the reaction 9-octadecanoyloxy-octadecanoate + H2O = 9-hydroxy-octadecanoate + octadecanoate + H(+). The enzyme catalyses 12-octadecanoyloxy-octadecanoate + H2O = 12-hydroxyoctadecanoate + octadecanoate + H(+). It carries out the reaction 13-octadecanoyloxy-octadecanoate + H2O = 13-hydroxy-octadecanoate + octadecanoate + H(+). The catalysed reaction is 9-(9Z-octadecenoyloxy)-octadecanoate + H2O = 9-hydroxy-octadecanoate + (9Z)-octadecenoate + H(+). It catalyses the reaction 12-(9Z-octadecenoyloxy)-octadecanoate + H2O = 12-hydroxyoctadecanoate + (9Z)-octadecenoate + H(+). The enzyme catalyses 13-(9Z-octadecenoyloxy)-octadecanoate + H2O = 13-hydroxy-octadecanoate + (9Z)-octadecenoate + H(+). It carries out the reaction 5-(9Z-octadecenoyloxy)-octadecanoate + H2O = 5-hydroxy-octadecanoate + (9Z)-octadecenoate + H(+). Hydrolyzes bioactive fatty-acid esters of hydroxy-fatty acids (FAHFAs), but not other major classes of lipids. Shows a preference for FAHFAs with branching distal from the carboxylate head group of the lipids. Regulates the expression and the cell-associated anticoagulant activity of the inhibitor TFPI in endothelial cells (in vitro). In Mus musculus (Mouse), this protein is Androgen-dependent TFPI-regulating protein (Adtrp).